Here is a 184-residue protein sequence, read N- to C-terminus: Chromophore lyase CpcS/CpeS 1 (184 aa).

It belongs to the CpcS/CpeS biliprotein lyase family.

In terms of biological role, covalently attaches a chromophore to Cys residue(s) of phycobiliproteins. The polypeptide is Chromophore lyase CpcS/CpeS 1 (Synechococcus sp. (strain JA-3-3Ab) (Cyanobacteria bacterium Yellowstone A-Prime)).